Reading from the N-terminus, the 115-residue chain is Rapid alkalinization factor (115 aa).

The signal sequence occupies residues 1-23; that stretch reads MGVPSGLILCVLIGAFFISMAAA. The propeptide at 24–66 is removed in mature form; the sequence is GDSGAYDWVMPARSGGGCKGSIGECIAEEEEFELDSESNRRIL. Cystine bridges form between C84–C94 and C107–C113.

Post-translationally, proteolytically cleaved, probably by S1P, a subtilisin-like serine protease (subtilase).

It is found in the secreted. Its function is as follows. Cell signaling peptide that may regulate plant stress, growth, and development. Mediates a rapid alkalinization of extracellular space by mediating a transient increase in the cytoplasmic Ca(2+) concentration leading to a calcium-dependent signaling events through a cell surface receptor and a concomitant activation of some intracellular mitogen-activated protein kinases. Prevents root growth and seedling development in heterologous system. This chain is Rapid alkalinization factor (RALF), found in Nicotiana tabacum (Common tobacco).